The primary structure comprises 237 residues: Ribosomal RNA small subunit methyltransferase G (237 aa).

Residues G75, F80, 127–128, and R146 contribute to the S-adenosyl-L-methionine site; that span reads AE.

The protein belongs to the methyltransferase superfamily. RNA methyltransferase RsmG family.

The protein resides in the cytoplasm. In terms of biological role, specifically methylates the N7 position of a guanine in 16S rRNA. In Synechococcus sp. (strain RCC307), this protein is Ribosomal RNA small subunit methyltransferase G.